A 136-amino-acid polypeptide reads, in one-letter code: Small ribosomal subunit protein uS8c (136 aa).

The protein belongs to the universal ribosomal protein uS8 family. As to quaternary structure, part of the 30S ribosomal subunit.

It is found in the plastid. The protein resides in the chloroplast. In terms of biological role, one of the primary rRNA binding proteins, it binds directly to 16S rRNA central domain where it helps coordinate assembly of the platform of the 30S subunit. The protein is Small ribosomal subunit protein uS8c (rps8) of Agrostis stolonifera (Creeping bentgrass).